We begin with the raw amino-acid sequence, 152 residues long: Large ribosomal subunit protein uL11 (152 aa).

This sequence belongs to the universal ribosomal protein uL11 family. As to quaternary structure, part of the ribosomal stalk of the 50S ribosomal subunit. Interacts with L10 and the large rRNA to form the base of the stalk. L10 forms an elongated spine to which L12 dimers bind in a sequential fashion forming a multimeric L10(L12)X complex. In terms of processing, one or more lysine residues are methylated.

Forms part of the ribosomal stalk which helps the ribosome interact with GTP-bound translation factors. The polypeptide is Large ribosomal subunit protein uL11 (Mycoplasmoides gallisepticum (strain R(low / passage 15 / clone 2)) (Mycoplasma gallisepticum)).